The chain runs to 241 residues: Ribose-5-phosphate isomerase A (241 aa).

Substrate-binding positions include 28 to 31 (TGST), 83 to 86 (DGAD), and 96 to 99 (KGGG). Residue Glu105 is the Proton acceptor of the active site. Lys123 contributes to the substrate binding site.

It belongs to the ribose 5-phosphate isomerase family. Homodimer.

It carries out the reaction aldehydo-D-ribose 5-phosphate = D-ribulose 5-phosphate. It functions in the pathway carbohydrate degradation; pentose phosphate pathway; D-ribose 5-phosphate from D-ribulose 5-phosphate (non-oxidative stage): step 1/1. Catalyzes the reversible conversion of ribose-5-phosphate to ribulose 5-phosphate. This is Ribose-5-phosphate isomerase A from Rhodopseudomonas palustris (strain BisA53).